A 200-amino-acid polypeptide reads, in one-letter code: Ribonuclease HII (200 aa).

Positions 1–200 (MRYGGVDEAG…EINKKLTDFI (200 aa)) constitute an RNase H type-2 domain. 3 residues coordinate a divalent metal cation: Asp7, Glu8, and Asp99.

This sequence belongs to the RNase HII family. Requires Mn(2+) as cofactor. Mg(2+) serves as cofactor.

The protein resides in the cytoplasm. It carries out the reaction Endonucleolytic cleavage to 5'-phosphomonoester.. Its function is as follows. Endonuclease that specifically degrades the RNA of RNA-DNA hybrids. In Nanoarchaeum equitans (strain Kin4-M), this protein is Ribonuclease HII.